A 182-amino-acid polypeptide reads, in one-letter code: dCTP deaminase, dUMP-forming (182 aa).

Residues 96 to 101, D113, 121 to 123, Q142, Y156, and Q163 each bind dCTP; these read RSSIGR and TLE. E123 (proton donor/acceptor) is an active-site residue.

The protein belongs to the dCTP deaminase family. In terms of assembly, homotrimer.

The catalysed reaction is dCTP + 2 H2O = dUMP + NH4(+) + diphosphate. It participates in pyrimidine metabolism; dUMP biosynthesis; dUMP from dCTP: step 1/1. Its function is as follows. Bifunctional enzyme that catalyzes both the deamination of dCTP to dUTP and the hydrolysis of dUTP to dUMP without releasing the toxic dUTP intermediate. The polypeptide is dCTP deaminase, dUMP-forming (Halothermothrix orenii (strain H 168 / OCM 544 / DSM 9562)).